Reading from the N-terminus, the 284-residue chain is Bifunctional protein FolD 1 (284 aa).

Residues 166 to 168 (GAS) and isoleucine 232 each bind NADP(+).

It belongs to the tetrahydrofolate dehydrogenase/cyclohydrolase family. Homodimer.

The catalysed reaction is (6R)-5,10-methylene-5,6,7,8-tetrahydrofolate + NADP(+) = (6R)-5,10-methenyltetrahydrofolate + NADPH. The enzyme catalyses (6R)-5,10-methenyltetrahydrofolate + H2O = (6R)-10-formyltetrahydrofolate + H(+). Its pathway is one-carbon metabolism; tetrahydrofolate interconversion. Its function is as follows. Catalyzes the oxidation of 5,10-methylenetetrahydrofolate to 5,10-methenyltetrahydrofolate and then the hydrolysis of 5,10-methenyltetrahydrofolate to 10-formyltetrahydrofolate. The polypeptide is Bifunctional protein FolD 1 (Pseudomonas syringae pv. syringae (strain B728a)).